The primary structure comprises 317 residues: ATP synthase gamma chain (317 aa).

This sequence belongs to the ATPase gamma chain family. In terms of assembly, F-type ATPases have 2 components, CF(1) - the catalytic core - and CF(0) - the membrane proton channel. CF(1) has five subunits: alpha(3), beta(3), gamma(1), delta(1), epsilon(1). CF(0) has three main subunits: a, b and c.

The protein localises to the cellular thylakoid membrane. Produces ATP from ADP in the presence of a proton gradient across the membrane. The gamma chain is believed to be important in regulating ATPase activity and the flow of protons through the CF(0) complex. The sequence is that of ATP synthase gamma chain from Acaryochloris marina (strain MBIC 11017).